The sequence spans 216 residues: MOB kinase activator-like 2A (216 aa).

4 residues coordinate Zn(2+): Cys-81, Cys-86, His-162, and His-167.

Belongs to the MOB1/phocein family.

Its subcellular location is the nucleus. The polypeptide is MOB kinase activator-like 2A (Arabidopsis thaliana (Mouse-ear cress)).